Here is a 519-residue protein sequence, read N- to C-terminus: Histidine--tRNA ligase, cytoplasmic (519 aa).

Residues 135–137, R162, Q178, D182, R331, and 335–336 contribute to the L-histidine site; these read DLT and YY.

The protein belongs to the class-II aminoacyl-tRNA synthetase family. Homodimer.

The protein localises to the cytoplasm. It carries out the reaction tRNA(His) + L-histidine + ATP = L-histidyl-tRNA(His) + AMP + diphosphate + H(+). In terms of biological role, catalyzes the ATP-dependent ligation of histidine to the 3'-end of its cognate tRNA, via the formation of an aminoacyl-adenylate intermediate (His-AMP). Plays a role in axon guidance. The sequence is that of Histidine--tRNA ligase, cytoplasmic (hars1) from Takifugu rubripes (Japanese pufferfish).